Here is a 211-residue protein sequence, read N- to C-terminus: Ribonuclease HII (211 aa).

One can recognise an RNase H type-2 domain in the interval 1–205; the sequence is MRFGVDEAGK…CDDVLAAASQ (205 aa). The a divalent metal cation site is built by Asp-6, Glu-7, and Asp-100.

This sequence belongs to the RNase HII family. It depends on Mn(2+) as a cofactor. Mg(2+) serves as cofactor.

It is found in the cytoplasm. It carries out the reaction Endonucleolytic cleavage to 5'-phosphomonoester.. Its function is as follows. Endonuclease that specifically degrades the RNA of RNA-DNA hybrids. This Haloarcula marismortui (strain ATCC 43049 / DSM 3752 / JCM 8966 / VKM B-1809) (Halobacterium marismortui) protein is Ribonuclease HII.